The primary structure comprises 1178 residues: Mannosyltransferase regulator 4 (1178 aa).

The Cytoplasmic segment spans residues Met1–Arg27. Residues Ile28–Pro48 form a helical; Signal-anchor for type II membrane protein membrane-spanning segment. At Gln49–Asn1178 the chain is on the lumenal side. The DXD signature appears at Asp519–Asp521. Positions Glu1041–Asn1178 are disordered. Repeat copies occupy residues Lys1042–Glu1049, Lys1050–Glu1057, Lys1058–Glu1065, Lys1066–Glu1073, Lys1074–Glu1081, and Lys1082–Glu1089. Residues Lys1042 to Glu1174 form a 17 X 8 AA tandem repeats of K-K-K-K-E-E-E-E region. A 7; approximate repeat occupies Lys1090 to Glu1097. Repeat unit 8 spans residues Lys1098 to Glu1105. One copy of the 9; approximate repeat lies at Lys1106–Glu1113. A 10; approximate repeat occupies Lys1114 to Glu1121. Residues Asn1122 to Glu1129 form an 11; approximate repeat. Residues Lys1130 to Glu1137 form repeat 12. Residues Lys1138 to Lys1144 form a 13; approximate repeat. The stretch at Asn1145–Glu1152 is one 14; approximate repeat. A 15; approximate repeat occupies Lys1153–Glu1160. The stretch at Lys1161–Glu1168 is one 16; approximate repeat. One copy of the 17; truncated repeat lies at Lys1169–Glu1174.

Belongs to the MNN4 family.

The protein localises to the golgi apparatus membrane. Functionally, golgi apparatus protein involved in N-glycan mannosylphosphorylation. While MNN4 seems to have a regulatory role in N-glycan mannosylphosphorylation, a transferase activity of MNN4 can not be ruled out. Mediates mannosylphosphate transfer in both the core and outer chain portions of N-linked oligosaccharides. Has partially redundant function with MNN14. The polypeptide is Mannosyltransferase regulator 4 (Saccharomyces cerevisiae (strain ATCC 204508 / S288c) (Baker's yeast)).